Here is a 329-residue protein sequence, read N- to C-terminus: Quinone-oxidoreductase QR1, chloroplastic (329 aa).

It belongs to the zinc-containing alcohol dehydrogenase family. Quinone oxidoreductase subfamily.

The protein resides in the plastid. It localises to the chloroplast outer membrane. The catalysed reaction is 2 a quinone + NADPH + H(+) = 2 a 1,4-benzosemiquinone + NADP(+). With respect to regulation, inhibited by dicumarol. In terms of biological role, NADPH-dependent single-electron reducing quinone reductase. Involved in haustorium initiation in parasitic plants through redox cycling of exogenous haustorium-inducing factors. Can use 9,10-phenanthrenequinone (PAQ), 1,2-naphthoquinone, 5-hydroxy-1,4-naphthoquinone (juglone) and 2,6-dimethoxy-p-benzoquinone (DMBQ) as substrates, but has no activity with menadione, diamide, 2,3-dimethoxy-5-methyl-1,4-benzoquinone or 1,4-naphthoquinone. The sequence is that of Quinone-oxidoreductase QR1, chloroplastic from Triphysaria versicolor (Yellow owl's clover).